Reading from the N-terminus, the 705-residue chain is Solute carrier family 12 member 8 (705 aa).

Transmembrane regions (helical) follow at residues 38–58 (FGTW…VVLF), 69–89 (GVLL…ITVL), 92–112 (IGVA…ISSV), 121–141 (VGLL…TGFA), 159–179 (ISVA…KWII), 181–201 (LQLL…VGSF), 232–252 (FFTV…GFNM), 268–288 (LAAV…LGAV), 306–326 (LVGF…CMGG), 368–388 (LVTM…VVTI), and 390–410 (FMLT…AHCG). Residues 472 to 512 (ESRQLGSREGNNPKNQKRKGKKGAKQTLQDSFLLDPGSPLS) form a disordered region. Basic residues predominate over residues 486 to 495 (NQKRKGKKGA). Helical transmembrane passes span 587–607 (WVSL…QWLY) and 612–632 (MGVA…LYLG).

It belongs to the SLC12A transporter family.

The protein resides in the membrane. Functionally, cation/chloride cotransporter that may play a role in the control of keratinocyte proliferation. This Mus musculus (Mouse) protein is Solute carrier family 12 member 8 (Slc12a8).